An 839-amino-acid chain; its full sequence is MAQFDTEYQRLEASYSDSPPGEEDLLVHVAEGSKSPWHHIENLDLFFSRVYNLHQKNGFTCMLIGEMFELMQFLFVVAFTTFLVSCVDYDILFANKMVNHSLHPTEPVKVTLPDAFLPAQVCSARIQENGSLITILVIAGVFWIHRLIKFIYNICCYWEIHSFYLHALRIPMSALPYCTWQEVQARIVQTQKEHQICIHKRELTELDIYHRILRFQNYMVALVNKSLLPLRFRLPGLGEVVFFTRGLKYNFELILFWGPGSLFLNEWSLKAEYKRGGQRLELAQRLSNRILWIGIANFLLCPLILIWQILYAFFSYAEVLKREPGALGARCWSLYGRCYLRHFNELEHELQSRLNRGYKPASKYMNCFLSPLLTLLAKNGAFFAGSILAVLIALTIYDEDVLAVEHVLTTVTLLGVTVTVCRSFIPDQHMVFCPEQLLRVILAHIHYMPDHWQGNAHRSQTRDEFAQLFQYKAVFILEELLSPIVTPLILIFCLRPRALEIIDFFRNFTVEVVGVGDTCSFAQMDVRQHGHPQWLSGGQTEASVYQQAEDGKTELSLMHFAITNPGWQPPRESTAFLGFLKEQVQRDGAAAGLAQGGLLPENALFTSIQSLQSESEPLSLIANVVAGSSCRGPSLSRDLQGSRHRADVASALRSFSPLQPGAAPQGRVPSTMTGSGVDARTASSGSSVWEGQLQSLVLSEYASTEMSLHALYMHQLHKQQTQAEPERHVWHRRESDESGESAPEEGGEGARAPQPIPRSASYPCATPRPGAPETTALHGGFQRRYGGITDPGTVPRGPSHFSRLPLGGWAEDGQPASRHPEPVPEEGSEDELPPQVHKV.

Residue A2 is modified to N-acetylalanine. The Cytoplasmic segment spans residues 2–61 (AQFDTEYQRLEASYSDSPPGEEDLLVHVAEGSKSPWHHIENLDLFFSRVYNLHQKNGFTC). The Tyrosine-based sorting signal signature appears at 8–11 (YQRL). 3 positions are modified to phosphoserine: S14, S16, and S18. The helical transmembrane segment at 62–84 (MLIGEMFELMQFLFVVAFTTFLV) threads the bilayer. The Lumenal segment spans residues 85-128 (SCVDYDILFANKMVNHSLHPTEPVKVTLPDAFLPAQVCSARIQE). N-linked (GlcNAc...) asparagine glycosylation occurs at N99. A helical membrane pass occupies residues 129–154 (NGSLITILVIAGVFWIHRLIKFIYNI). The Cytoplasmic portion of the chain corresponds to 155–290 (CCYWEIHSFY…ELAQRLSNRI (136 aa)). An intramembrane segment occupies 291–301 (LWIGIANFLLC). Residues 302 to 319 (PLILIWQILYAFFSYAEV) lie on the Cytoplasmic side of the membrane. Residues 320–328 (LKREPGALG) lie within the membrane without spanning it. Topologically, residues 329–371 (ARCWSLYGRCYLRHFNELEHELQSRLNRGYKPASKYMNCFLSP) are cytoplasmic. The chain crosses the membrane as a helical span at residues 372 to 397 (LLTLLAKNGAFFAGSILAVLIALTIY). Residues 398–406 (DEDVLAVEH) lie on the Lumenal side of the membrane. The chain crosses the membrane as a helical span at residues 407–424 (VLTTVTLLGVTVTVCRSF). Residues 425-470 (IPDQHMVFCPEQLLRVILAHIHYMPDHWQGNAHRSQTRDEFAQLFQ) lie on the Cytoplasmic side of the membrane. The stretch at 471–480 (YKAVFILEEL) is an intramembrane region. Topologically, residues 481–483 (LSP) are cytoplasmic. An intramembrane segment occupies 484–492 (IVTPLILIF). Topologically, residues 493–839 (CLRPRALEII…DELPPQVHKV (347 aa)) are cytoplasmic. Position 656 is a phosphoserine (S656). 2 disordered regions span residues 657 to 686 (PLQP…SSGS) and 717 to 839 (HKQQ…VHKV). The segment covering 724-736 (EPERHVWHRRESD) has biased composition (basic and acidic residues). Phosphoserine occurs at positions 735, 738, 741, and 828. Acidic residues-rich tracts occupy residues 737–747 (ESGESAPEEGG) and 823–832 (VPEEGSEDEL).

The protein belongs to the ATG9 family. In terms of assembly, homotrimer; forms a homotrimer with a central pore that forms a path between the two membrane leaflets. Interacts (via cytoplasmic its C-terminus) with ATG2A. Interacts with SUPT20H. Interacts (via the tyrosine-based sorting signal motif) with AP4M1; promoting association with the AP-4 complex. Interacts with ARFIP1 and ARFIP2. Interacts with ATG4A; the interaction is direct and promotes ATG9A trafficking. Ufmylated in a DDRGK1 dependent manner.

It localises to the preautophagosomal structure membrane. Its subcellular location is the cytoplasmic vesicle. The protein localises to the autophagosome membrane. It is found in the golgi apparatus. The protein resides in the trans-Golgi network membrane. It localises to the late endosome membrane. Its subcellular location is the recycling endosome membrane. The protein localises to the endoplasmic reticulum membrane. It is found in the mitochondrion membrane. The enzyme catalyses a 1,2-diacyl-sn-glycero-3-phosphocholine(in) = a 1,2-diacyl-sn-glycero-3-phosphocholine(out). The catalysed reaction is a 1,2-diacyl-sn-glycero-3-phospho-L-serine(in) = a 1,2-diacyl-sn-glycero-3-phospho-L-serine(out). It catalyses the reaction a 1,2-diacyl-sn-glycero-3-phosphoethanolamine(in) = a 1,2-diacyl-sn-glycero-3-phosphoethanolamine(out). In terms of biological role, phospholipid scramblase involved in autophagy by mediating autophagosomal membrane expansion. Cycles between the preautophagosomal structure/phagophore assembly site (PAS) and the cytoplasmic vesicle pool and supplies membrane for the growing autophagosome. Lipid scramblase activity plays a key role in preautophagosomal structure/phagophore assembly by distributing the phospholipids that arrive through ATG2 (ATG2A or ATG2B) from the cytoplasmic to the luminal leaflet of the bilayer, thereby driving autophagosomal membrane expansion. Also required to supply phosphatidylinositol 4-phosphate to the autophagosome initiation site by recruiting the phosphatidylinositol 4-kinase beta (PI4KB) in a process dependent on ARFIP2, but not ARFIP1. In addition to autophagy, also plays a role in necrotic cell death. This Mus musculus (Mouse) protein is Autophagy-related protein 9A.